The primary structure comprises 507 residues: GMP synthase [glutamine-hydrolyzing] (507 aa).

The Glutamine amidotransferase type-1 domain occupies 3-190; sequence KILVIDYGSQ…IQGICGLKGS (188 aa). Cysteine 77 acts as the Nucleophile in catalysis. Catalysis depends on residues histidine 164 and glutamate 166. The region spanning 191-382 is the GMPS ATP-PPase domain; that stretch reads WTLMDFVENK…LGLPREILYR (192 aa). ATP is bound at residue 218 to 224; it reads SGGVDSS.

As to quaternary structure, homodimer.

The catalysed reaction is XMP + L-glutamine + ATP + H2O = GMP + L-glutamate + AMP + diphosphate + 2 H(+). The protein operates within purine metabolism; GMP biosynthesis; GMP from XMP (L-Gln route): step 1/1. Its function is as follows. Catalyzes the synthesis of GMP from XMP. This Petrotoga mobilis (strain DSM 10674 / SJ95) protein is GMP synthase [glutamine-hydrolyzing].